The following is a 424-amino-acid chain: MAKNIQAIRGMNDYLPGETAIWQRIESTLKNVLGSYGYSEIRLPIVEQTPLFKRAIGEVTDVVEKEMYTFEDRNGDSLTLRPEGTAGCVRAGIEHGLLYNQEQRLWYIGPMFRHERPQKGRYRQFHQLGAEVFGLQGPDIDAELIMLTARWWRALGIAEHVSLELNSIGSLEARANYRDALVAFLEQHQETLDEDCKRRMYTNPLRVLDSKNPDVQALLNDAPALGDYLDDDSREHFAGLCKLLDAAGIAYTVNQRLVRGLDYYNRTVFEWVTNSLGSQGTVCAGGRYDGLVEQLGGRATPAVGFAMGLERLVLLVQAVNPEFIASPVVDIYLVAAGTETQSAAMTLAERLRDEMPDVKLITNHGGGNFKKQFARADKWGARIALVLGESEVANGTVVVKDLRSGEQTAVAQDSVAAHLRTLLG.

It belongs to the class-II aminoacyl-tRNA synthetase family. In terms of assembly, homodimer.

The protein resides in the cytoplasm. The catalysed reaction is tRNA(His) + L-histidine + ATP = L-histidyl-tRNA(His) + AMP + diphosphate + H(+). The chain is Histidine--tRNA ligase from Salmonella arizonae (strain ATCC BAA-731 / CDC346-86 / RSK2980).